We begin with the raw amino-acid sequence, 263 residues long: Ribosomal RNA small subunit methyltransferase A (263 aa).

Positions 13, 15, 40, 61, 86, and 105 each coordinate S-adenosyl-L-methionine.

It belongs to the class I-like SAM-binding methyltransferase superfamily. rRNA adenine N(6)-methyltransferase family. RsmA subfamily.

The protein localises to the cytoplasm. The enzyme catalyses adenosine(1518)/adenosine(1519) in 16S rRNA + 4 S-adenosyl-L-methionine = N(6)-dimethyladenosine(1518)/N(6)-dimethyladenosine(1519) in 16S rRNA + 4 S-adenosyl-L-homocysteine + 4 H(+). Its function is as follows. Specifically dimethylates two adjacent adenosines (A1518 and A1519) in the loop of a conserved hairpin near the 3'-end of 16S rRNA in the 30S particle. May play a critical role in biogenesis of 30S subunits. This Dichelobacter nodosus (strain VCS1703A) protein is Ribosomal RNA small subunit methyltransferase A.